Consider the following 454-residue polypeptide: Probable N-octanoylanthranilate hydrolase AqdA2 (454 aa).

Ser185 acts as the Acyl-ester intermediate in catalysis. Catalysis depends on charge relay system residues Glu306 and His379.

The protein belongs to the type-B carboxylesterase/lipase family.

It catalyses the reaction N-octanoylanthranilate + H2O = anthranilate + octanoate + H(+). Involved in the degradation of the Pseudomonas aeruginosa quorum sensing signal molecules HHQ (2-heptyl-4-quinolone) and PQS (2-heptyl-3-hydroxy-4-quinolone) to anthranilic acid. Probably catalyzes the hydrolysis of N-octanoylanthranilic acid to anthranilic acid. This is Probable N-octanoylanthranilate hydrolase AqdA2 from Rhodococcus erythropolis (Arthrobacter picolinophilus).